A 460-amino-acid polypeptide reads, in one-letter code: Ribosomal protein uS12 methylthiotransferase RimO (460 aa).

The MTTase N-terminal domain maps to 16 to 130 (NKIHFISLGC…ILSAIESKEA (115 aa)). [4Fe-4S] cluster contacts are provided by Cys25, Cys61, Cys93, Cys164, Cys168, and Cys171. A Radical SAM core domain is found at 150-382 (STPKHYAYLK…SQTQKKNVEK (233 aa)). One can recognise a TRAM domain in the interval 385–455 (KQLVGQIVEA…GYDLVGRVIK (71 aa)).

Belongs to the methylthiotransferase family. RimO subfamily. Requires [4Fe-4S] cluster as cofactor.

It localises to the cytoplasm. The catalysed reaction is L-aspartate(89)-[ribosomal protein uS12]-hydrogen + (sulfur carrier)-SH + AH2 + 2 S-adenosyl-L-methionine = 3-methylsulfanyl-L-aspartate(89)-[ribosomal protein uS12]-hydrogen + (sulfur carrier)-H + 5'-deoxyadenosine + L-methionine + A + S-adenosyl-L-homocysteine + 2 H(+). Its function is as follows. Catalyzes the methylthiolation of an aspartic acid residue of ribosomal protein uS12. This is Ribosomal protein uS12 methylthiotransferase RimO from Chlamydia caviae (strain ATCC VR-813 / DSM 19441 / 03DC25 / GPIC) (Chlamydophila caviae).